The primary structure comprises 337 residues: Ketol-acid reductoisomerase (NADP(+)) (337 aa).

Positions 1-180 (MQVYYDKDAD…GGTKGGVIET (180 aa)) constitute a KARI N-terminal Rossmann domain. NADP(+) is bound by residues 24-27 (YGSQ), arginine 47, and serine 51. Residue histidine 106 is part of the active site. Residue glycine 132 participates in NADP(+) binding. A KARI C-terminal knotted domain is found at 181-326 (TFREETETDL…ARLRAMMPWI (146 aa)). Residues aspartate 189, glutamate 193, glutamate 225, and glutamate 229 each contribute to the Mg(2+) site. Residue serine 250 participates in substrate binding.

This sequence belongs to the ketol-acid reductoisomerase family. It depends on Mg(2+) as a cofactor.

The catalysed reaction is (2R)-2,3-dihydroxy-3-methylbutanoate + NADP(+) = (2S)-2-acetolactate + NADPH + H(+). The enzyme catalyses (2R,3R)-2,3-dihydroxy-3-methylpentanoate + NADP(+) = (S)-2-ethyl-2-hydroxy-3-oxobutanoate + NADPH + H(+). It participates in amino-acid biosynthesis; L-isoleucine biosynthesis; L-isoleucine from 2-oxobutanoate: step 2/4. It functions in the pathway amino-acid biosynthesis; L-valine biosynthesis; L-valine from pyruvate: step 2/4. Involved in the biosynthesis of branched-chain amino acids (BCAA). Catalyzes an alkyl-migration followed by a ketol-acid reduction of (S)-2-acetolactate (S2AL) to yield (R)-2,3-dihydroxy-isovalerate. In the isomerase reaction, S2AL is rearranged via a Mg-dependent methyl migration to produce 3-hydroxy-3-methyl-2-ketobutyrate (HMKB). In the reductase reaction, this 2-ketoacid undergoes a metal-dependent reduction by NADPH to yield (R)-2,3-dihydroxy-isovalerate. The polypeptide is Ketol-acid reductoisomerase (NADP(+)) (Neisseria gonorrhoeae (strain ATCC 700825 / FA 1090)).